The following is an 86-amino-acid chain: ATP synthase subunit c (86 aa).

A run of 2 helical transmembrane segments spans residues Ala-4–Ala-24 and Val-57–Val-77.

Belongs to the ATPase C chain family. In terms of assembly, F-type ATPases have 2 components, F(1) - the catalytic core - and F(0) - the membrane proton channel. F(1) has five subunits: alpha(3), beta(3), gamma(1), delta(1), epsilon(1). F(0) has three main subunits: a(1), b(2) and c(10-14). The alpha and beta chains form an alternating ring which encloses part of the gamma chain. F(1) is attached to F(0) by a central stalk formed by the gamma and epsilon chains, while a peripheral stalk is formed by the delta and b chains.

It is found in the cell membrane. In terms of biological role, f(1)F(0) ATP synthase produces ATP from ADP in the presence of a proton or sodium gradient. F-type ATPases consist of two structural domains, F(1) containing the extramembraneous catalytic core and F(0) containing the membrane proton channel, linked together by a central stalk and a peripheral stalk. During catalysis, ATP synthesis in the catalytic domain of F(1) is coupled via a rotary mechanism of the central stalk subunits to proton translocation. Its function is as follows. Key component of the F(0) channel; it plays a direct role in translocation across the membrane. A homomeric c-ring of between 10-14 subunits forms the central stalk rotor element with the F(1) delta and epsilon subunits. This chain is ATP synthase subunit c, found in Clostridioides difficile (strain 630) (Peptoclostridium difficile).